Reading from the N-terminus, the 498-residue chain is Lysine--tRNA ligase (498 aa).

Glutamate 408 and glutamate 415 together coordinate Mg(2+).

It belongs to the class-II aminoacyl-tRNA synthetase family. Homodimer. Mg(2+) serves as cofactor.

Its subcellular location is the cytoplasm. The catalysed reaction is tRNA(Lys) + L-lysine + ATP = L-lysyl-tRNA(Lys) + AMP + diphosphate. The chain is Lysine--tRNA ligase from Listeria welshimeri serovar 6b (strain ATCC 35897 / DSM 20650 / CCUG 15529 / CIP 8149 / NCTC 11857 / SLCC 5334 / V8).